We begin with the raw amino-acid sequence, 500 residues long: Probable cytosol aminopeptidase (500 aa).

The Mn(2+) site is built by Lys-262 and Asp-267. Lys-274 is a catalytic residue. Residues Asp-285, Asp-344, and Glu-346 each contribute to the Mn(2+) site. Arg-348 is a catalytic residue.

Belongs to the peptidase M17 family. Mn(2+) serves as cofactor.

Its subcellular location is the cytoplasm. It carries out the reaction Release of an N-terminal amino acid, Xaa-|-Yaa-, in which Xaa is preferably Leu, but may be other amino acids including Pro although not Arg or Lys, and Yaa may be Pro. Amino acid amides and methyl esters are also readily hydrolyzed, but rates on arylamides are exceedingly low.. The catalysed reaction is Release of an N-terminal amino acid, preferentially leucine, but not glutamic or aspartic acids.. In terms of biological role, presumably involved in the processing and regular turnover of intracellular proteins. Catalyzes the removal of unsubstituted N-terminal amino acids from various peptides. This is Probable cytosol aminopeptidase from Ehrlichia ruminantium (strain Welgevonden).